Reading from the N-terminus, the 503-residue chain is Probable cytosol aminopeptidase (503 aa).

The Mn(2+) site is built by lysine 268 and aspartate 273. Lysine 280 is a catalytic residue. Positions 291, 350, and 352 each coordinate Mn(2+). Arginine 354 is a catalytic residue.

This sequence belongs to the peptidase M17 family. Mn(2+) serves as cofactor.

It localises to the cytoplasm. The enzyme catalyses Release of an N-terminal amino acid, Xaa-|-Yaa-, in which Xaa is preferably Leu, but may be other amino acids including Pro although not Arg or Lys, and Yaa may be Pro. Amino acid amides and methyl esters are also readily hydrolyzed, but rates on arylamides are exceedingly low.. It carries out the reaction Release of an N-terminal amino acid, preferentially leucine, but not glutamic or aspartic acids.. Functionally, presumably involved in the processing and regular turnover of intracellular proteins. Catalyzes the removal of unsubstituted N-terminal amino acids from various peptides. The protein is Probable cytosol aminopeptidase of Corynebacterium efficiens (strain DSM 44549 / YS-314 / AJ 12310 / JCM 11189 / NBRC 100395).